The primary structure comprises 228 residues: MKVTFLGHAGFLIEGSKKIVIDPFLTGNPLAKAKAEEVKADLVLVSHGHGDHLGDAVAIAGQSNALVVSVYELADYCARHGAQSHGMHIGGSRAFDGVKIKLTPAWHGAGFGTGEGPMEYLGNPCGFVIKIDGKTIYHSGDTGLFGDMELIGRFNSLDLALLPIGDNFTMGPEDALEAVKMLKPKTVIPMHYNTWPLIEQDPAEFKSAVEAATSAEVKILSPGESMEL.

It belongs to the UPF0173 family.

In Pelotomaculum thermopropionicum (strain DSM 13744 / JCM 10971 / SI), this protein is UPF0173 metal-dependent hydrolase PTH_1415.